The chain runs to 191 residues: Large ribosomal subunit protein uL29m (191 aa).

Belongs to the universal ribosomal protein uL29 family. As to quaternary structure, component of the mitochondrial large ribosomal subunit. Mature mitochondrial ribosomes consist of a small (37S) and a large (54S) subunit. The 37S subunit contains at least 33 different proteins and 1 molecule of RNA (15S). The 54S subunit contains at least 45 different proteins and 1 molecule of RNA (21S).

Its subcellular location is the mitochondrion. The protein is Large ribosomal subunit protein uL29m (MRPL4) of Sclerotinia sclerotiorum (strain ATCC 18683 / 1980 / Ss-1) (White mold).